A 312-amino-acid chain; its full sequence is tRNA dimethylallyltransferase (312 aa).

An ATP-binding site is contributed by 11 to 18 (GPTAAGKS). 13-18 (TAAGKS) is a substrate binding site. Interaction with substrate tRNA stretches follow at residues 36–39 (DSAT), 160–164 (QRIQR), and 243–248 (RCVGYR).

The protein belongs to the IPP transferase family. Monomer. The cofactor is Mg(2+).

The enzyme catalyses adenosine(37) in tRNA + dimethylallyl diphosphate = N(6)-dimethylallyladenosine(37) in tRNA + diphosphate. In terms of biological role, catalyzes the transfer of a dimethylallyl group onto the adenine at position 37 in tRNAs that read codons beginning with uridine, leading to the formation of N6-(dimethylallyl)adenosine (i(6)A). This chain is tRNA dimethylallyltransferase, found in Bordetella avium (strain 197N).